Here is a 318-residue protein sequence, read N- to C-terminus: Nitrate reductase [NADH] (318 aa).

Positions 216–291 (AKSFTMAEVE…LLEYYIGELA (76 aa)) constitute a Cytochrome b5 heme-binding domain. Heme contacts are provided by His-251 and His-274.

Belongs to the nitrate reductase family. As to quaternary structure, homodimer. It depends on FAD as a cofactor. Requires heme as cofactor. Mo-molybdopterin is required as a cofactor.

It carries out the reaction nitrite + NAD(+) + H2O = nitrate + NADH + H(+). Functionally, nitrate reductase is a key enzyme involved in the first step of nitrate assimilation in plants, fungi and bacteria. The chain is Nitrate reductase [NADH] from Chlorella vulgaris (Green alga).